Consider the following 460-residue polypeptide: Tyrosine-protein phosphatase non-receptor type 18 (460 aa).

In terms of domain architecture, Tyrosine-protein phosphatase spans 26–291; that stretch reads LAGEFSDIQA…RFLYHTVAQM (266 aa). Residues Asp197, 229-235, and Gln276 each bind substrate; that span reads CSAGCGR. The active-site Phosphocysteine intermediate is Cys229. Residues 361-460 form a disordered region; it reads GAPAGAGSGT…RDPPAEWTRV (100 aa). Gly residues predominate over residues 364-378; it reads AGAGSGTQTGTGTGT. Tyr389 carries the post-translational modification Phosphotyrosine. The residue at position 393 (Thr393) is a Phosphothreonine. The residue at position 426 (Tyr426) is a Phosphotyrosine. Residues 449–460 show a composition bias toward basic and acidic residues; it reads GPRDPPAEWTRV.

It belongs to the protein-tyrosine phosphatase family. Non-receptor class 4 subfamily. As to quaternary structure, interacts with PSTPIP1. Expressed in brain, colon and several tumor-derived cell lines.

The protein localises to the nucleus. Its subcellular location is the cytoplasm. It catalyses the reaction O-phospho-L-tyrosyl-[protein] + H2O = L-tyrosyl-[protein] + phosphate. In terms of biological role, differentially dephosphorylate autophosphorylated tyrosine kinases which are known to be overexpressed in tumor tissues. In Homo sapiens (Human), this protein is Tyrosine-protein phosphatase non-receptor type 18 (PTPN18).